A 66-amino-acid chain; its full sequence is Metallothionein (66 aa).

The residue at position 1 (S1) is an N-acetylserine. Positions 9, 13, 18, 20, 24, 26, 30, 32, 35, 38, 40, 45, 47, 51, 57, 59, 63, and 65 each coordinate Cd(2+).

Belongs to the metallothionein superfamily. Type 2 family.

Functionally, the metallothioneins are involved in the cellular sequestration of toxic metal ions and regulation of essential trace elements. The polypeptide is Metallothionein (Arianta arbustorum (Land snail)).